The chain runs to 133 residues: Profilin (133 aa).

It belongs to the profilin family.

In terms of biological role, more likely to influence phosphoinositide metabolism than actin assembly. The protein is Profilin of Cowpox virus (strain GRI-90 / Grishak) (CPV).